The sequence spans 160 residues: Iron-sulfur assembly protein IscA1 (160 aa).

It belongs to the HesB/IscA family. In terms of assembly, tetramer.

The protein resides in the mitochondrion. Its pathway is cofactor biosynthesis; iron-sulfur cluster biosynthesis. Functionally, participates in iron-sulfur cluster formation (ISC) pathway for iron-sulfur (Fe-S) cluster biogenesis. Can bind iron and [4Fe-4S] clusters. May function as an iron chaperone. The polypeptide is Iron-sulfur assembly protein IscA1 (Plasmodium falciparum (isolate 3D7)).